A 197-amino-acid chain; its full sequence is Protein GrpE (197 aa).

Residues 1–39 (MSSKEQKTPEGQAPEEIIMDQHEEIEAVEPEASAEQVDP) form a disordered region.

This sequence belongs to the GrpE family. Homodimer.

Its subcellular location is the cytoplasm. Functionally, participates actively in the response to hyperosmotic and heat shock by preventing the aggregation of stress-denatured proteins, in association with DnaK and GrpE. It is the nucleotide exchange factor for DnaK and may function as a thermosensor. Unfolded proteins bind initially to DnaJ; upon interaction with the DnaJ-bound protein, DnaK hydrolyzes its bound ATP, resulting in the formation of a stable complex. GrpE releases ADP from DnaK; ATP binding to DnaK triggers the release of the substrate protein, thus completing the reaction cycle. Several rounds of ATP-dependent interactions between DnaJ, DnaK and GrpE are required for fully efficient folding. This Escherichia coli O157:H7 (strain EC4115 / EHEC) protein is Protein GrpE.